Here is a 559-residue protein sequence, read N- to C-terminus: 2-isopropylmalate synthase (559 aa).

Residues 30–304 (PLWAAVDLRD…DPGIDFSRMK (275 aa)) enclose the Pyruvate carboxyltransferase domain. Positions 39, 243, 245, and 279 each coordinate Mg(2+). Positions 436-559 (VPMGWVLRSY…ETSEQLIANS (124 aa)) are regulatory domain.

The protein belongs to the alpha-IPM synthase/homocitrate synthase family. LeuA type 2 subfamily. In terms of assembly, homodimer. The cofactor is Mg(2+).

The protein localises to the cytoplasm. It carries out the reaction 3-methyl-2-oxobutanoate + acetyl-CoA + H2O = (2S)-2-isopropylmalate + CoA + H(+). It participates in amino-acid biosynthesis; L-leucine biosynthesis; L-leucine from 3-methyl-2-oxobutanoate: step 1/4. In terms of biological role, catalyzes the condensation of the acetyl group of acetyl-CoA with 3-methyl-2-oxobutanoate (2-ketoisovalerate) to form 3-carboxy-3-hydroxy-4-methylpentanoate (2-isopropylmalate). In Alcanivorax borkumensis (strain ATCC 700651 / DSM 11573 / NCIMB 13689 / SK2), this protein is 2-isopropylmalate synthase.